We begin with the raw amino-acid sequence, 387 residues long: MEQGAEGLSQWPVAPHQFTEDTEKSLSFLDMSSSPGSGGVHTSWNRGPSGIRRVPQCPELERMSLASAQAPRQSACEMGQQFSMSPPEHGLSYCPQMTFTASQMVYSQGMSPSQPGMGAFKGAQAMPLGEPSISSVAVTFSGNLRMPPSGLPVSPPSGIPLMSHIGMPTMPYSGLPTVPFNGDALTPNMFLDPTMPPTEVQAVLPSLAQMLPSRDPQDFAMPPAGSPSLLPLESQGSFLSQPVSQEDFPKHHLCEPRREAQNSRAQERASGRSSPVSRPYHCEYENCGKAYTKRSHLVSHQRKHTGERPYKCTWEACTWSFFRSDELGRHTRIHTRYRPHKCDQCGRQFMRSDHLRQHQRTHMRMPRSPDPQADSGRRAGPLPAPHL.

3 disordered regions span residues 28 to 54 (FLDM…IRRV), 213 to 234 (SRDP…PLES), and 257 to 277 (RREA…SPVS). Polar residues predominate over residues 30-46 (DMSSSPGSGGVHTSWNR). Over residues 257–270 (RREAQNSRAQERAS) the composition is skewed to basic and acidic residues. 3 C2H2-type zinc fingers span residues 280–304 (YHCE…QRKH), 310–334 (YKCT…TRIH), and 340–362 (HKCD…QRTH). The disordered stretch occupies residues 357-387 (QHQRTHMRMPRSPDPQADSGRRAGPLPAPHL).

It belongs to the Sp1 C2H2-type zinc-finger protein family.

The protein localises to the nucleus. Functionally, transcription repressor that binds to the promoter of target genes and prevents their expression. Acts as a negative regulator of epithelial-mesenchymal transition and metastasis in breast cancer. Specifically binds the 5'-CACCC-3' sequence in the promoter of ID1, a key metastasis regulator in breast cancer, and repress its expression. May be a germ cell-specific transcription factor that plays important roles in spermatid differentiation and oocyte development. This Sus scrofa (Pig) protein is Krueppel-like factor 17 (KLF17).